Consider the following 352-residue polypeptide: MFDLNQSLFLRALRRQPVERTPIWIMRQAGRYLPEYRKVREHAGDFLNLCKNPELACEVTLQPLRRYALDAAILFSDILTIPDAMGLGLYFAEGEGPRFTNPLQDTKAIHTLKIPSIPESLSYVFDAARLIRQEMPKELPLIGFSGSPWTLACYMVEGGSSRDFKRILNLIYTEKEAAHLLLNKLAVSVTAYLIEQIKAGVNAVMIFDTWGGVLTPQNYKDFSLAYMHQIVQQLKKEYPDIPVILFTKNGGQWLEWMAETGCDALGVDWTCDLASARKRVGGKVALQGNLDPAVLLTTKNCIRSEVGSVLASYGYGTGHIFNLGHGITPDVPPENVAIMIEAVHEISPQYHL.

Residues 27 to 31, D77, Y154, T209, and H325 each bind substrate; that span reads RQAGR.

This sequence belongs to the uroporphyrinogen decarboxylase family. As to quaternary structure, homodimer.

It localises to the cytoplasm. The enzyme catalyses uroporphyrinogen III + 4 H(+) = coproporphyrinogen III + 4 CO2. Its pathway is porphyrin-containing compound metabolism; protoporphyrin-IX biosynthesis; coproporphyrinogen-III from 5-aminolevulinate: step 4/4. Catalyzes the decarboxylation of four acetate groups of uroporphyrinogen-III to yield coproporphyrinogen-III. This chain is Uroporphyrinogen decarboxylase, found in Legionella pneumophila subsp. pneumophila (strain Philadelphia 1 / ATCC 33152 / DSM 7513).